We begin with the raw amino-acid sequence, 214 residues long: Histidine biosynthesis bifunctional protein HisIE (214 aa).

Residues 1–125 form a phosphoribosyl-AMP cyclohydrolase region; sequence MPATALSLPL…ESIEPPPADT (125 aa). Residues 126–214 form a phosphoribosyl-ATP pyrophosphohydrolase region; that stretch reads LSQVYNIVCQ…VYEQLQLRRR (89 aa).

The protein in the N-terminal section; belongs to the PRA-CH family. It in the C-terminal section; belongs to the PRA-PH family.

The protein localises to the cytoplasm. It carries out the reaction 1-(5-phospho-beta-D-ribosyl)-ATP + H2O = 1-(5-phospho-beta-D-ribosyl)-5'-AMP + diphosphate + H(+). The catalysed reaction is 1-(5-phospho-beta-D-ribosyl)-5'-AMP + H2O = 1-(5-phospho-beta-D-ribosyl)-5-[(5-phospho-beta-D-ribosylamino)methylideneamino]imidazole-4-carboxamide. The protein operates within amino-acid biosynthesis; L-histidine biosynthesis; L-histidine from 5-phospho-alpha-D-ribose 1-diphosphate: step 2/9. It participates in amino-acid biosynthesis; L-histidine biosynthesis; L-histidine from 5-phospho-alpha-D-ribose 1-diphosphate: step 3/9. This chain is Histidine biosynthesis bifunctional protein HisIE, found in Thermosynechococcus vestitus (strain NIES-2133 / IAM M-273 / BP-1).